Consider the following 51-residue polypeptide: Large ribosomal subunit protein eL39 (51 aa).

The protein belongs to the eukaryotic ribosomal protein eL39 family.

In Methanocaldococcus jannaschii (strain ATCC 43067 / DSM 2661 / JAL-1 / JCM 10045 / NBRC 100440) (Methanococcus jannaschii), this protein is Large ribosomal subunit protein eL39 (rpl39e).